The chain runs to 1696 residues: PH domain leucine-rich repeat protein phosphatase 1 (1696 aa).

The residue at position 1 (Met-1) is an N-acetylmethionine. Disordered regions lie at residues 1-97 (MEPA…GGGA) and 222-398 (LGHG…VVGE). Low complexity predominate over residues 79–92 (VPQPAAGGAAPVTA). The segment covering 313 to 325 (DTESFSLSPSAES) has biased composition (polar residues). Ser-378 carries the phosphoserine modification. One can recognise a PH domain in the interval 499-599 (RIQLSGMYNV…WLRQVSKVAS (101 aa)). LRR repeat units lie at residues 601-622 (RISSVDLSCCSLEHLPANLFYS), 624-645 (DLTHLNLKQNFLRQNPSLPAAR), 655-676 (KLKSLNLSNNHLGAFPSAVCSI), 678-699 (TLAELNVSCNALQEVPAAVGAM), 701-722 (NLQTFLLDGNFLQSLPAELENM), 724-746 (QLSYLGLSFNEFTDIPEVLEKLT), 836-857 (FLKALYASSNELVQLDVYPVPN), 858-879 (YLSYMDVSRNCLESVPEWVCES), 881-902 (KLEVLDIGHNQICELPARLFCN), 904-925 (SLRKLLAGHNRLARLPERLERT), 926-947 (SVEVLDVQHNQIIELPPNLLMK), 950-971 (SLRFLNASANKLETLPPATLSE), 976-996 (ILQELYLTNNSLTDKCVPLLT), 1000-1021 (RLKILHMAYNRLQSFPASKMAK), 1024-1045 (ELEEIDISGNKLKAIPTTIMNC), 1047-1068 (RMHTVIAHSNCIEVFPEVMQLP), 1069-1090 (EVKCVDLSCNELSEITLPENLP), and 1092-1113 (KLQELDLTGNPRLALDHKSLEL). The 248-residue stretch at 1138-1385 (SHGYTEASGV…DSISAVVVQL (248 aa)) folds into the PPM-type phosphatase domain. 4 residues coordinate Mn(2+): Asp-1173, Gly-1174, Lys-1337, and Asp-1376. Disordered regions lie at residues 1422 to 1473 (RPSD…SPAY) and 1610 to 1696 (KPGG…DTPL). 3 stretches are compositionally biased toward low complexity: residues 1431–1452 (SSSSGMASEISSELSTSEMSSE), 1647–1660 (QQQQQQQQQQQQQQ), and 1670–1680 (QAQAQAQAQAQ). Positions 1694-1696 (TPL) match the PDZ-binding motif.

In terms of assembly, interacts with the nucleotide free form of K-Ras (KRAS) via its LRR repeats. Interacts with AKT2, AKT3 and PRKCB isoform beta-II. Interacts with WDR48 and USP12. Mn(2+) serves as cofactor. As to expression, mainly present in brain (at protein level). Isoform 2 is more abundant in adult brain neurons than isoform 1 in. Isoforms 1 and 2 are expressed in the retina but not found in rod outer segments.

It localises to the cytoplasm. The protein resides in the membrane. The protein localises to the cell membrane. It is found in the nucleus. Its subcellular location is the nucleoplasm. It localises to the nucleus membrane. It carries out the reaction O-phospho-L-seryl-[protein] + H2O = L-seryl-[protein] + phosphate. The enzyme catalyses O-phospho-L-threonyl-[protein] + H2O = L-threonyl-[protein] + phosphate. Its activity is regulated as follows. Insensitive to okadaic acid. Deubiquitination by WDR48-USP12 complex positively regulates PHLPP1 stability. In terms of biological role, protein phosphatase involved in regulation of Akt and PKC signaling. Mediates dephosphorylation in the C-terminal domain hydrophobic motif of members of the AGC Ser/Thr protein kinase family; specifically acts on 'Ser-473' of AKT2 and AKT3, 'Ser-660' of PRKCB and 'Ser-657' of PRKCA. Isoform 2 seems to have a major role in regulating Akt signaling in hippocampal neurons while isoform 1 may promote Akt and PKC activation and inhibit ERK signaling. Akt regulates the balance between cell survival and apoptosis through a cascade that primarily alters the function of transcription factors that regulate pro- and antiapoptotic genes. Dephosphorylation of 'Ser-473' of Akt triggers apoptosis and suppression of tumor growth. Dephosphorylation of PRKCA and PRKCB leads to their destabilization and degradation. Dephosphorylates STK4 on 'Thr-387' leading to STK4 activation and apoptosis. Dephosphorylates RPS6KB1 and is involved in regulation of cap-dependent translation. Inhibits cancer cell proliferation and may act as a tumor suppressor. Dephosphorylates RAF1 inhibiting its kinase activity. May act as a negative regulator of K-Ras signaling in membrane rafts. Involved in the hippocampus-dependent long-term memory formation. Involved in circadian control by regulating the consolidation of circadian periodicity after resetting. Involved in development and function of regulatory T-cells. The polypeptide is PH domain leucine-rich repeat protein phosphatase 1 (Phlpp1) (Rattus norvegicus (Rat)).